A 520-amino-acid polypeptide reads, in one-letter code: Keratin, type II cytoskeletal 72 (520 aa).

A head region spans residues 1–133 (MSRQLTLYPG…DPEIQKVRAQ (133 aa)). A coil 1A region spans residues 134–169 (EREQIKALNNKFASFIDKVRFLEQQNQVLETKWELL). An IF rod domain is found at 134–447 (EREQIKALNN…KLLESEESRM (314 aa)). A linker 1 region spans residues 170-188 (QQLDQNNSRRSLEPVHESY). Residues 189–280 (ISNLQKQLEI…VLFEGEIAQM (92 aa)) are coil 1B. The linker 12 stretch occupies residues 281–304 (QSHISDTSVILSMDNNRQLDLDSI). Positions 305–443 (LAEVRAQYEE…ATYRKLLESE (139 aa)) are coil 2. Residues 444–520 (ESRMAGEYPS…SSCVSKKASR (77 aa)) form a tail region. A disordered region spans residues 495–520 (GSCGSELKDPPAKTSASSCVSKKASR).

Belongs to the intermediate filament family. In terms of assembly, heterotetramer of two type I and two type II keratins.

In terms of biological role, has a role in hair formation. Specific component of keratin intermediate filaments in the inner root sheath (IRS) of the hair follicle. In Rattus norvegicus (Rat), this protein is Keratin, type II cytoskeletal 72 (Krt72).